A 122-amino-acid polypeptide reads, in one-letter code: Serum amyloid A-2 protein (122 aa).

Positions 1–18 (MKLLSGLLLCSLVLGVSG) are cleaved as a signal peptide. Position 19 is a pyrrolidone carboxylic acid (glutamine 19). Positions 90–122 (GAEDSMADQAANEWGRSGKDPNHFRPKGLPDKY) are disordered. Residues 105–122 (RSGKDPNHFRPKGLPDKY) are compositionally biased toward basic and acidic residues.

This sequence belongs to the SAA family. In terms of assembly, apolipoprotein of the HDL complex. In terms of tissue distribution, expressed by the liver; secreted in plasma.

Its subcellular location is the secreted. Major acute phase reactant. The polypeptide is Serum amyloid A-2 protein (SAA2) (Oryctolagus cuniculus (Rabbit)).